The chain runs to 692 residues: Elongation factor G (692 aa).

The tr-type G domain occupies 8-282; it reads ENTRNIGIMA…AVIDYLPSPL (275 aa). GTP contacts are provided by residues 17–24, 81–85, and 135–138; these read AHIDAGKT, DTPGH, and NKMD.

The protein belongs to the TRAFAC class translation factor GTPase superfamily. Classic translation factor GTPase family. EF-G/EF-2 subfamily.

Its subcellular location is the cytoplasm. Its function is as follows. Catalyzes the GTP-dependent ribosomal translocation step during translation elongation. During this step, the ribosome changes from the pre-translocational (PRE) to the post-translocational (POST) state as the newly formed A-site-bound peptidyl-tRNA and P-site-bound deacylated tRNA move to the P and E sites, respectively. Catalyzes the coordinated movement of the two tRNA molecules, the mRNA and conformational changes in the ribosome. This Bacillus cereus (strain G9842) protein is Elongation factor G.